Here is a 347-residue protein sequence, read N- to C-terminus: uncharacterized protein (347 aa).

This is an uncharacterized protein from Saccharomyces cerevisiae (strain ATCC 204508 / S288c) (Baker's yeast).